Reading from the N-terminus, the 420-residue chain is MDKLVIEGGQKLAGEIVVSGAKNAALPILCAGLLSAEPVHLDNVPDLQDVRTTLKLLGQMGVRTESADGKVSLDASKVDNLVAPYELVKTMRASILVLGPLVARFGEAKVSLPGGCAIGARPVDQHIKGLQAMGAEINIEHGFIEARAKRLKGARIITDMITVTGTENLLMAAVLADGETIIENAAREPEVGDLASLLVSMGAKIEGIGTDRLVIQGVDKLHGAKHTVVPDRIEAGTFLCAVAAAGGDVTLRHVRPQILEAVTDKLRDAGVTIEEGDDWMRVRMNQRPKAVSFRTSEYPAFPTDMQAQFMALNTLAEGTSQVVETIFENRFMHVQELNRLGANITIDGKTALVNGVEKLSGAKVMATDLRASASLVIAGLCADGETLIDRIYHLDRGYDRMESKLTAVGAKVRRIKGNQA.

Phosphoenolpyruvate is bound at residue 22-23 (KN). UDP-N-acetyl-alpha-D-glucosamine is bound at residue R92. C116 serves as the catalytic Proton donor. C116 carries the 2-(S-cysteinyl)pyruvic acid O-phosphothioketal modification. Residues 121–125 (RPVDQ), D304, and I326 each bind UDP-N-acetyl-alpha-D-glucosamine.

It belongs to the EPSP synthase family. MurA subfamily.

The protein resides in the cytoplasm. It carries out the reaction phosphoenolpyruvate + UDP-N-acetyl-alpha-D-glucosamine = UDP-N-acetyl-3-O-(1-carboxyvinyl)-alpha-D-glucosamine + phosphate. It functions in the pathway cell wall biogenesis; peptidoglycan biosynthesis. Its function is as follows. Cell wall formation. Adds enolpyruvyl to UDP-N-acetylglucosamine. This chain is UDP-N-acetylglucosamine 1-carboxyvinyltransferase, found in Paraburkholderia phymatum (strain DSM 17167 / CIP 108236 / LMG 21445 / STM815) (Burkholderia phymatum).